Reading from the N-terminus, the 508-residue chain is Photosystem II CP47 reaction center protein (508 aa).

Helical transmembrane passes span 21–36 (SVHI…WAGS), 101–115 (IVFS…IWHW), 140–156 (GIHL…FGAF), 203–218 (IAAG…FHLS), 237–252 (VLSS…AFVV), and 457–472 (SFAL…HGSR).

The protein belongs to the PsbB/PsbC family. PsbB subfamily. PSII is composed of 1 copy each of membrane proteins PsbA, PsbB, PsbC, PsbD, PsbE, PsbF, PsbH, PsbI, PsbJ, PsbK, PsbL, PsbM, PsbT, PsbX, PsbY, PsbZ, Psb30/Ycf12, at least 3 peripheral proteins of the oxygen-evolving complex and a large number of cofactors. It forms dimeric complexes. Requires Binds multiple chlorophylls. PSII binds additional chlorophylls, carotenoids and specific lipids. as cofactor.

It is found in the plastid. The protein resides in the chloroplast thylakoid membrane. Functionally, one of the components of the core complex of photosystem II (PSII). It binds chlorophyll and helps catalyze the primary light-induced photochemical processes of PSII. PSII is a light-driven water:plastoquinone oxidoreductase, using light energy to abstract electrons from H(2)O, generating O(2) and a proton gradient subsequently used for ATP formation. This chain is Photosystem II CP47 reaction center protein, found in Draba nemorosa (Woodland whitlowgrass).